We begin with the raw amino-acid sequence, 79 residues long: MDVKAEVIEIIDELFMEDVSDMMDEDLFDAGVLDSMGTVELIVELESRFDIRVPVSEFGRDDWNTANKIVEGVTELRNA.

A Carrier domain is found at 1–77 (MDVKAEVIEI…KIVEGVTELR (77 aa)). The residue at position 35 (serine 35) is an O-(pantetheine 4'-phosphoryl)serine.

It belongs to the DltC family. Post-translationally, 4'-phosphopantetheine is transferred from CoA to a specific serine of apo-DCP.

Its subcellular location is the cytoplasm. Its pathway is cell wall biogenesis; lipoteichoic acid biosynthesis. Its function is as follows. Carrier protein involved in the D-alanylation of lipoteichoic acid (LTA). The loading of thioester-linked D-alanine onto DltC is catalyzed by D-alanine--D-alanyl carrier protein ligase DltA. The DltC-carried D-alanyl group is further transferred to cell membrane phosphatidylglycerol (PG) by forming an ester bond, probably catalyzed by DltD. D-alanylation of LTA plays an important role in modulating the properties of the cell wall in Gram-positive bacteria, influencing the net charge of the cell wall. The sequence is that of D-alanyl carrier protein from Streptococcus thermophilus (strain CNRZ 1066).